Reading from the N-terminus, the 592-residue chain is Catabolite repression protein creC (592 aa).

The tract at residues 119 to 140 is disordered; that stretch reads NSALAAAPVKDPSKKRKPKNNI. WD repeat units lie at residues 248–288, 327–368, 369–408, and 411–455; these read INSS…ALFI, LANQ…DVFR, SYYG…IIAR, and GHDS…LHRP. Disordered stretches follow at residues 459–513 and 556–592; these read HQTS…HPVE and WDRP…MGSL. 2 stretches are compositionally biased toward polar residues: residues 484 to 499 and 564 to 576; these read SSGN…TAAD and SDNY…SETL. A WD 5 repeat occupies 529–566; it reads VGEDPICWLGFQEDTIMTSSLEGHIRTWDRPRENISDN.

Belongs to the WD repeat creC family. As to quaternary structure, interacts with creB.

Its function is as follows. Component of the regulatory network controlling carbon source utilization through ubiquitination and deubiquitination involving creA, creB, creC, creD and acrB. Required to prevent the proteolysis of the CreB deubiquitinating enzyme in the absence of carbon catabolite repression. CreB deubiquitinating enzyme stabilized in a complex with the CreC leads to the expression of genes such as those in the proline and quinate pathways. The protein is Catabolite repression protein creC (creC) of Emericella nidulans (strain FGSC A4 / ATCC 38163 / CBS 112.46 / NRRL 194 / M139) (Aspergillus nidulans).